Here is a 455-residue protein sequence, read N- to C-terminus: Phosphoglucosamine mutase (455 aa).

Ser108 functions as the Phosphoserine intermediate in the catalytic mechanism. Mg(2+) is bound by residues Ser108, Asp246, Asp248, and Asp250. Residue Ser108 is modified to Phosphoserine.

The protein belongs to the phosphohexose mutase family. The cofactor is Mg(2+). Post-translationally, activated by phosphorylation.

The catalysed reaction is alpha-D-glucosamine 1-phosphate = D-glucosamine 6-phosphate. Its function is as follows. Catalyzes the conversion of glucosamine-6-phosphate to glucosamine-1-phosphate. This Frankia casuarinae (strain DSM 45818 / CECT 9043 / HFP020203 / CcI3) protein is Phosphoglucosamine mutase.